Reading from the N-terminus, the 635-residue chain is MINISFPDGSIKQFAKNITAYEVANAISMSLAKAAMVAEINGELQDLSIVIDNDCKFRILTAKDPECLEIIRHDAAHLTAEAVKELFPETQVTIGPAIENGYYYDFARDKPFTNDDLAVIEAKMQELSQKNEQVTRELWDRDKAVEFFKSIGEHYKAEIIASIPAGEPITLYRQGNFIDLCRGPHSPSTGVVKHFKLMKVAGAYWRGDSRNEMLQRIYGTAWATKEQLDSYLLMLEEAEKRDHRKLGRELDLFHFQEEAQGMVFWHDKGWSIYNTIEQYIRKKIRKNGYTEVKTPVLVDKSLWEASGHWEKFRDDMFALETDDKTLALKPMNCPCHVQIFKQGIKSYRDLPLRMSEFGLCHRNEASGALHGLMRVRSLVQDDAHIFCAAEQITDETVSFCKLLTEVYKDFGFTDIKVKFSDRPEIRAGSNEVWDKAENALKEAVEQAGFTYTLNPGEGAFYGPKLEFVLTDAIGRQWQCGTLQMDFVLPERLDASYVAASGEKKRPVMLHRAILGSLERFIGILIEEYAGRFPLWLAPVQVAIATITSDLNDYALEVQKALIDNGVRTDFNISPDKINYKIREFSNQKIPMIAVIGKQEQENKQVAIRRLGTTDQEVLSVEQLIAVVKEENEKYL.

A TGS domain is found at 1–61; sequence MINISFPDGS…DNDCKFRILT (61 aa). Residues 242-533 are catalytic; sequence DHRKLGRELD…LIEEYAGRFP (292 aa). The Zn(2+) site is built by Cys333, His384, and His510.

It belongs to the class-II aminoacyl-tRNA synthetase family. Homodimer. Zn(2+) is required as a cofactor.

The protein localises to the cytoplasm. It catalyses the reaction tRNA(Thr) + L-threonine + ATP = L-threonyl-tRNA(Thr) + AMP + diphosphate + H(+). Its function is as follows. Catalyzes the attachment of threonine to tRNA(Thr) in a two-step reaction: L-threonine is first activated by ATP to form Thr-AMP and then transferred to the acceptor end of tRNA(Thr). Also edits incorrectly charged L-seryl-tRNA(Thr). This Rickettsia rickettsii (strain Sheila Smith) protein is Threonine--tRNA ligase.